A 155-amino-acid chain; its full sequence is SsrA-binding protein (155 aa).

It belongs to the SmpB family.

The protein localises to the cytoplasm. In terms of biological role, required for rescue of stalled ribosomes mediated by trans-translation. Binds to transfer-messenger RNA (tmRNA), required for stable association of tmRNA with ribosomes. tmRNA and SmpB together mimic tRNA shape, replacing the anticodon stem-loop with SmpB. tmRNA is encoded by the ssrA gene; the 2 termini fold to resemble tRNA(Ala) and it encodes a 'tag peptide', a short internal open reading frame. During trans-translation Ala-aminoacylated tmRNA acts like a tRNA, entering the A-site of stalled ribosomes, displacing the stalled mRNA. The ribosome then switches to translate the ORF on the tmRNA; the nascent peptide is terminated with the 'tag peptide' encoded by the tmRNA and targeted for degradation. The ribosome is freed to recommence translation, which seems to be the essential function of trans-translation. The protein is SsrA-binding protein of Geobacillus thermodenitrificans (strain NG80-2).